The chain runs to 245 residues: 1-(5-phosphoribosyl)-5-[(5-phosphoribosylamino)methylideneamino] imidazole-4-carboxamide isomerase 1 (245 aa).

Catalysis depends on D7, which acts as the Proton acceptor. Catalysis depends on D129, which acts as the Proton donor.

This sequence belongs to the HisA/HisF family.

It localises to the cytoplasm. The catalysed reaction is 1-(5-phospho-beta-D-ribosyl)-5-[(5-phospho-beta-D-ribosylamino)methylideneamino]imidazole-4-carboxamide = 5-[(5-phospho-1-deoxy-D-ribulos-1-ylimino)methylamino]-1-(5-phospho-beta-D-ribosyl)imidazole-4-carboxamide. It participates in amino-acid biosynthesis; L-histidine biosynthesis; L-histidine from 5-phospho-alpha-D-ribose 1-diphosphate: step 4/9. The protein is 1-(5-phosphoribosyl)-5-[(5-phosphoribosylamino)methylideneamino] imidazole-4-carboxamide isomerase 1 (hisA1) of Photorhabdus laumondii subsp. laumondii (strain DSM 15139 / CIP 105565 / TT01) (Photorhabdus luminescens subsp. laumondii).